The primary structure comprises 1659 residues: Fatty acid synthase subunit alpha (1659 aa).

Residues 114-139 (TQAQASGGAGTIAGAGSSTAPVTAPP) are disordered. The Carrier domain maps to 160 to 235 (AQAFEIVRTL…AALQKTFTGQ (76 aa)). Position 195 is an O-(pantetheine 4'-phosphoryl)serine (serine 195). Positions 588–826 (GRSVLITGAG…LCLMFNTMCS (239 aa)) are ketoreductase (KR) domain. Residues 1030–1575 (KQLLHEVLIQ…QKGAQTIVVH (546 aa)) enclose the Ketosynthase family 3 (KS3) domain. Active-site for beta-ketoacyl synthase activity residues include cysteine 1217, histidine 1458, and histidine 1499. The disordered stretch occupies residues 1631–1659 (ETLLDPTPPQTNVDDRVARSIVQQESAEP).

Belongs to the thiolase-like superfamily. Fungal fatty acid synthetase subunit alpha family. In terms of assembly, [Alpha(6)beta(6)] hexamers of two multifunctional subunits (alpha and beta). In terms of processing, 4'-phosphopantetheine is transferred from CoA to a specific serine of the acyl carrier domain by the C-terminal PPT domain. This modification is essential for activity because fatty acids are bound in thioester linkage to the sulfhydryl of the prosthetic group.

It carries out the reaction acetyl-CoA + n malonyl-CoA + 2n NADPH + 4n H(+) = a long-chain-acyl-CoA + n CoA + n CO2 + 2n NADP(+).. The catalysed reaction is a fatty acyl-[ACP] + malonyl-[ACP] + H(+) = a 3-oxoacyl-[ACP] + holo-[ACP] + CO2. The enzyme catalyses a (3R)-hydroxyacyl-[ACP] + NADP(+) = a 3-oxoacyl-[ACP] + NADPH + H(+). It participates in secondary metabolite biosynthesis. Its function is as follows. Fatty acid synthase subunit alpha; part of the gene cluster that mediates the biosynthesis of aspercryptins, linear lipopeptides built from six amino acids including 2 highly unusual and nonproteogenic amino acids, 2-amino-octanoic acid (2aoa) and 2-amino-dodecanol (2adol). The core structure of aspercryptins is as follows: Ser/Ala-Thr-Ile/Val-2aoa-Asn-2adol. The first step of aspercryptin biosynthesis is the generation of the fatty acid precursors, octanoic and dodecanoic acids, by the FAS subunits atnF and atnM. The fatty acid precursors are likely transformed into the corresponding alpha-amino fatty acids in three steps. First, they are hydroxylated by the cytochrome P450 monooxygenase atnE, then oxidized to the corresponding alpha-keto acids by the NAD(P)-dependent oxidoreductase atnD, and finally converted to the alpha-amino fatty acids by the PLP-dependent aminotransferases atnH or atnJ. the alpha-amino fatty acids, 2-amino-octanoic and 2-amino-dodecanoic acids, are recognized, activated, and covalently tethered to the NRPS atnA by its fourth and sixth adenylation domains. The second module of atnA is the Thr module and contains an epimerase (E) domain responsible for the epimerization of Thr to D-allo-Thr. Additionally, despite atnA having only one epimerase domain, the first amino acid of aspercryptin A1 is D-Ser, suggesting that serine is either loaded directly as D-Ser on the first module or that the epimerase domain in the threonine module epimerizes both L-Ser and L-Thr. After condensation of the hexapeptide of aspercryptin, the C-terminal reductase (TE) domain might be involved in the reductive release and production of the aldehyde hexapeptide. Further reduction would generate aspercryptins. The variety of aspercryptins produced reflects the flexibility of the atnA NRPS, allowing incorporation of alanine instead of serine, valine for isoleucine, and a C10 fatty amino alcohol instead of the C12 version. AtnB seems to be involved in the selectivity for Ile versus Val by the third module. Moreover, type B, C and D aspercryptins have an additional N-terminal cichorine, acetyl and propionyl group respectively. The chain is Fatty acid synthase subunit alpha from Emericella nidulans (strain FGSC A4 / ATCC 38163 / CBS 112.46 / NRRL 194 / M139) (Aspergillus nidulans).